The primary structure comprises 85 residues: Large ribosomal subunit protein bL27 (85 aa).

Positions 1–20 (MAHKKAGGSTRNGRDSESKR) are disordered.

Belongs to the bacterial ribosomal protein bL27 family.

The chain is Large ribosomal subunit protein bL27 from Yersinia pseudotuberculosis serotype O:1b (strain IP 31758).